The following is a 372-amino-acid chain: Probable G-protein coupled receptor 45 (372 aa).

Residues 1-38 (MACNSTSLEAYTYLLLNTSNASDSGSTQLPAPLRISLA) lie on the Extracellular side of the membrane. 3 N-linked (GlcNAc...) asparagine glycosylation sites follow: Asn-4, Asn-17, and Asn-20. Residues 39–59 (IVMLLMTVVGFLGNTVVCIIV) form a helical membrane-spanning segment. The Cytoplasmic portion of the chain corresponds to 60–75 (YQRPAMRSAINLLLAT). Residues 76–96 (LAFSDIMLSLCCMPFTAVTLI) form a helical membrane-spanning segment. The Extracellular portion of the chain corresponds to 97-109 (TVRWHFGDHFCRL). Residues 110–130 (SATLYWFFVLEGVAILLIISV) form a helical membrane-spanning segment. Over 131–149 (DRFLIIVQRQDKLNPRRAK) the chain is Cytoplasmic. Residues 150–170 (VIIAVSWVLSFCIAGPSLTGW) form a helical membrane-spanning segment. Residues 171 to 198 (TLVEVPARAPQCVLGYTELPADRAYVVT) lie on the Extracellular side of the membrane. The helical transmembrane segment at 199–219 (LVVAVFFAPFGVMLCAYMCIL) threads the bilayer. Residues 220–268 (NTVRKNAVRVHNQSDSLDLRQLTRAGLRRLQRQQQVSVDLSFKTKAFTT) lie on the Cytoplasmic side of the membrane. Residues 269 to 289 (ILILFVGFSLCWLPHSVYSLL) traverse the membrane as a helical segment. Residues 290–305 (SVFSQRFYCGSSFYAT) lie on the Extracellular side of the membrane. The chain crosses the membrane as a helical span at residues 306–326 (STCVLWLSYLKSVFNPIVYCW). Residues 327–372 (RIKKFREACIELLPQTFQILPKVPERIRRRIQPSTVYVCNENQSAV) are Cytoplasmic-facing.

This sequence belongs to the G-protein coupled receptor 1 family. Expressed in brain; detected in the basal forebrain, frontal cortex, and caudate, but not in thalamus, hippocampus, or putamen.

Its subcellular location is the cell membrane. In terms of biological role, orphan receptor. May play a role in brain function. The protein is Probable G-protein coupled receptor 45 (GPR45) of Homo sapiens (Human).